Consider the following 689-residue polypeptide: Glycine--tRNA ligase beta subunit (689 aa).

This sequence belongs to the class-II aminoacyl-tRNA synthetase family. As to quaternary structure, tetramer of two alpha and two beta subunits.

Its subcellular location is the cytoplasm. It carries out the reaction tRNA(Gly) + glycine + ATP = glycyl-tRNA(Gly) + AMP + diphosphate. The protein is Glycine--tRNA ligase beta subunit of Klebsiella pneumoniae subsp. pneumoniae (strain ATCC 700721 / MGH 78578).